The sequence spans 304 residues: Porphobilinogen deaminase (304 aa).

Position 241 is an S-(dipyrrolylmethanemethyl)cysteine (Cys241).

Belongs to the HMBS family. In terms of assembly, monomer. The cofactor is dipyrromethane.

The catalysed reaction is 4 porphobilinogen + H2O = hydroxymethylbilane + 4 NH4(+). It functions in the pathway porphyrin-containing compound metabolism; protoporphyrin-IX biosynthesis; coproporphyrinogen-III from 5-aminolevulinate: step 2/4. Functionally, tetrapolymerization of the monopyrrole PBG into the hydroxymethylbilane pre-uroporphyrinogen in several discrete steps. This is Porphobilinogen deaminase from Ruthia magnifica subsp. Calyptogena magnifica.